A 350-amino-acid chain; its full sequence is tRNA-splicing endonuclease (350 aa).

Residues tyrosine 286, histidine 297, and lysine 328 contribute to the active site.

This sequence belongs to the tRNA-intron endonuclease family. Archaeal long subfamily. In terms of assembly, homodimer.

It carries out the reaction pretRNA = a 3'-half-tRNA molecule with a 5'-OH end + a 5'-half-tRNA molecule with a 2',3'-cyclic phosphate end + an intron with a 2',3'-cyclic phosphate and a 5'-hydroxyl terminus.. Endonuclease that removes tRNA introns. Cleaves pre-tRNA at the 5'- and 3'-splice sites to release the intron. The products are an intron and two tRNA half-molecules bearing 2',3' cyclic phosphate and 5'-OH termini. Recognizes a pseudosymmetric substrate in which 2 bulged loops of 3 bases are separated by a stem of 4 bp. The protein is tRNA-splicing endonuclease of Methanosarcina acetivorans (strain ATCC 35395 / DSM 2834 / JCM 12185 / C2A).